The sequence spans 213 residues: Dephospho-CoA kinase (213 aa).

Positions 3–202 (RIGLTGGIGS…QSYLALADKH (200 aa)) constitute a DPCK domain. 11 to 16 (GSGKTR) serves as a coordination point for ATP.

The protein belongs to the CoaE family.

The protein localises to the cytoplasm. It catalyses the reaction 3'-dephospho-CoA + ATP = ADP + CoA + H(+). The protein operates within cofactor biosynthesis; coenzyme A biosynthesis; CoA from (R)-pantothenate: step 5/5. In terms of biological role, catalyzes the phosphorylation of the 3'-hydroxyl group of dephosphocoenzyme A to form coenzyme A. The chain is Dephospho-CoA kinase from Bordetella avium (strain 197N).